The primary structure comprises 188 residues: COMM domain-containing protein 1 (188 aa).

The sufficient for interaction with SLC12A2 stretch occupies residues 1-122; that stretch reads MAAELEGSKA…RWDSGLRGLS (122 aa). Residues H100, M109, and H133 each coordinate Cu cation. Residues 117–185 enclose the COMM domain; sequence GLRGLSWRVD…EVEESISTLM (69 aa). The interval 124-188 is required for binding to PtdIns(4,5)P2; the sequence is RVDGKSQSRH…ESISTLMQPA (65 aa).

This sequence belongs to the COMM domain-containing protein 1 family. As to quaternary structure, component of the commander complex consisting of the CCC subcomplex and the retriever subcomplex. Component of the CCC (COMMD/CCDC22/CCDC93) subcomplex consisting of COMMD1, COMMD2, COMMD3, COMMD4, COMMD5, COMMD6, COMMD7, COMMD8, COMMD9, COMMD10, CCDC22 and CCDC93; within the complex forms a heterodimer with COMMD6. Interacts with VPS35L; the interaction associates the CCC complex with the retriever complex. Identified in a complex with an E3 ubiquitin ligase complex composed of TCEB1/elongin C, CUL2, SOCS1 and RBX1; in the complex interacts directly with SOCS1 and CUL2. Identified in a complex with NF-kappa-B. Interacts directly with SLC12A2. Interacts directly with ATP7B (via the N-terminal region). Interacts with ATP7A. Interacts with FAM107A; this interaction stabilizes COMMD1 in the nucleus. Interacts with CCS, CDKN2A, RELA, REL, RELB, NFKB1/p105, NFKB2/p100, NFKBIB, SCNN1D, SCNN1B, CFTR, CLU, SGK1, AKT1, CUL1, CUL2, CUL3, CUL4A, CUL4B, CUL5, CUL7, HIF1A. Post-translationally, ubiquitinated; undergoes both 'Lys-63'- and 'Lys-48'-linked polyubiquitination. Ubiquitinated by XIAP, leading to its proteasomal degradation.

It localises to the nucleus. The protein resides in the cytoplasm. It is found in the endosome membrane. The protein localises to the cytoplasmic vesicle. Its subcellular location is the early endosome. It localises to the recycling endosome. Its function is as follows. Scaffold protein in the commander complex that is essential for endosomal recycling of transmembrane cargos; the commander complex is composed of the CCC subcomplex and the retriever subcomplex. Can modulate activity of cullin-RING E3 ubiquitin ligase (CRL) complexes by displacing CAND1; in vitro promotes CRL E3 activity and dissociates CAND1 from CUL1 and CUL2. Promotes ubiquitination of NF-kappa-B subunit RELA and its subsequent proteasomal degradation. Down-regulates NF-kappa-B activity. Involved in the regulation of membrane expression and ubiquitination of SLC12A2. Modulates Na(+) transport in epithelial cells by regulation of apical cell surface expression of amiloride-sensitive sodium channel (ENaC) subunits and by promoting their ubiquitination presumably involving NEDD4L. Promotes the localization of SCNN1D to recycling endosomes. Promotes CFTR cell surface expression through regulation of its ubiquitination. Down-regulates SOD1 activity by interfering with its homodimerization. Plays a role in copper ion homeostasis. Involved in copper-dependent ATP7A trafficking between the trans-Golgi network and vesicles in the cell periphery; the function is proposed to depend on its association within the CCC complex and cooperation with the WASH complex on early endosomes. Can bind one copper ion per monomer. May function to facilitate biliary copper excretion within hepatocytes. Binds to phosphatidylinositol 4,5-bisphosphate (PtdIns(4,5)P2). Involved in the regulation of HIF1A-mediated transcription; competes with ARNT/Hif-1-beta for binding to HIF1A resulting in decreased DNA binding and impaired transcriptional activation by HIF-1. Negatively regulates neuroblastoma G1/S phase cell cycle progression and cell proliferation by stimulating ubiquitination of NF-kappa-B subunit RELA and NF-kappa-B degradation in a FAM107A- and actin-dependent manner. This chain is COMM domain-containing protein 1 (COMMD1), found in Canis lupus familiaris (Dog).